We begin with the raw amino-acid sequence, 450 residues long: Bifunctional protein GlmU (450 aa).

Residues 1–229 (MRRHAIILAA…VEEIMGVNDR (229 aa)) form a pyrophosphorylase region. Residues 8-11 (LAAG), K22, Q72, and 77-78 (GT) contribute to the UDP-N-acetyl-alpha-D-glucosamine site. Residue D102 participates in Mg(2+) binding. G139, E154, and N227 together coordinate UDP-N-acetyl-alpha-D-glucosamine. N227 serves as a coordination point for Mg(2+). Residues 230–250 (VMLSQAEKAMQRRTNHYHMLN) are linker. Residues 251 to 450 (GVTIIDPDST…RQTTKEGYRK (200 aa)) form an N-acetyltransferase region. UDP-N-acetyl-alpha-D-glucosamine contacts are provided by R332 and K350. H362 (proton acceptor) is an active-site residue. The UDP-N-acetyl-alpha-D-glucosamine site is built by Y365 and N376. Residues 385 to 386 (NY), A422, and R439 each bind acetyl-CoA.

The protein in the N-terminal section; belongs to the N-acetylglucosamine-1-phosphate uridyltransferase family. This sequence in the C-terminal section; belongs to the transferase hexapeptide repeat family. In terms of assembly, homotrimer. Requires Mg(2+) as cofactor.

It localises to the cytoplasm. The enzyme catalyses alpha-D-glucosamine 1-phosphate + acetyl-CoA = N-acetyl-alpha-D-glucosamine 1-phosphate + CoA + H(+). It carries out the reaction N-acetyl-alpha-D-glucosamine 1-phosphate + UTP + H(+) = UDP-N-acetyl-alpha-D-glucosamine + diphosphate. The protein operates within nucleotide-sugar biosynthesis; UDP-N-acetyl-alpha-D-glucosamine biosynthesis; N-acetyl-alpha-D-glucosamine 1-phosphate from alpha-D-glucosamine 6-phosphate (route II): step 2/2. It participates in nucleotide-sugar biosynthesis; UDP-N-acetyl-alpha-D-glucosamine biosynthesis; UDP-N-acetyl-alpha-D-glucosamine from N-acetyl-alpha-D-glucosamine 1-phosphate: step 1/1. It functions in the pathway bacterial outer membrane biogenesis; LPS lipid A biosynthesis. Catalyzes the last two sequential reactions in the de novo biosynthetic pathway for UDP-N-acetylglucosamine (UDP-GlcNAc). The C-terminal domain catalyzes the transfer of acetyl group from acetyl coenzyme A to glucosamine-1-phosphate (GlcN-1-P) to produce N-acetylglucosamine-1-phosphate (GlcNAc-1-P), which is converted into UDP-GlcNAc by the transfer of uridine 5-monophosphate (from uridine 5-triphosphate), a reaction catalyzed by the N-terminal domain. The sequence is that of Bifunctional protein GlmU from Staphylococcus aureus (strain Mu50 / ATCC 700699).